We begin with the raw amino-acid sequence, 378 residues long: Protein RecA (378 aa).

Residue 79–86 (GPESSGKT) coordinates ATP.

It belongs to the RecA family.

Its subcellular location is the cytoplasm. Functionally, can catalyze the hydrolysis of ATP in the presence of single-stranded DNA, the ATP-dependent uptake of single-stranded DNA by duplex DNA, and the ATP-dependent hybridization of homologous single-stranded DNAs. It interacts with LexA causing its activation and leading to its autocatalytic cleavage. This is Protein RecA from Streptococcus equi subsp. zooepidemicus (strain H70).